A 230-amino-acid polypeptide reads, in one-letter code: uncharacterized protein (230 aa).

A helical membrane pass occupies residues 19–39 (GIFQVLLQLVLAMMTVWDFAG). Residue Asn41 is glycosylated (N-linked (GlcNAc...) asparagine; by host). Residues 55–75 (SFLLVLYTGLKQILEYMFSIC) form a helical membrane-spanning segment. Residues Asn86, Asn157, Asn168, and Asn182 are each glycosylated (N-linked (GlcNAc...) asparagine; by host). The stretch at 172–196 (TNLHKYQNDENDTEEDSEDIEKNSD) forms a coiled coil. Positions 178–205 (QNDENDTEEDSEDIEKNSDPKENSDIDS) are disordered. A compositionally biased stretch (acidic residues) spans 180–190 (DENDTEEDSED). Residues 191–201 (IEKNSDPKENS) show a composition bias toward basic and acidic residues.

Its subcellular location is the membrane. This is an uncharacterized protein from Acanthamoeba polyphaga mimivirus (APMV).